The primary structure comprises 283 residues: MIDTTAPLSLLEALVLGIVQGLTEFLPISSTAHLRVVPALLGWDDPGVSVTAAIQLGSVAAVIAYFRRDLTQVLTGISRAVRHGQWRDPDARLGVAMVIGTLPILVLGLGIKFFWHAGYASSPLRSVPSIAIVSIVMALFLAMAECMGPRLKQLGGVTGRDGFVVGLAQALAVIPGVSRSGSTLTASLFDGWNRADAARFSFLLGIPAISIAGLVELKSALSTSAGAGPLPLLVGIFSAAVVSWLAIDWLLRFLQRNSTWIFVGYRLVFGAGLLVWWAFKSAN.

7 helical membrane-spanning segments follow: residues 46 to 66 (PGVSVTAAIQLGSVAAVIAYF), 95 to 115 (VAMVIGTLPILVLGLGIKFFW), 127 to 147 (VPSIAIVSIVMALFLAMAECM), 154 to 174 (LGGVTGRDGFVVGLAQALAVI), 200 to 220 (FSFLLGIPAISIAGLVELKSA), 227 to 247 (AGPLPLLVGIFSAAVVSWLAI), and 259 to 279 (TWIFVGYRLVFGAGLLVWWAF).

It belongs to the UppP family.

The protein localises to the cell inner membrane. It catalyses the reaction di-trans,octa-cis-undecaprenyl diphosphate + H2O = di-trans,octa-cis-undecaprenyl phosphate + phosphate + H(+). Functionally, catalyzes the dephosphorylation of undecaprenyl diphosphate (UPP). Confers resistance to bacitracin. The protein is Undecaprenyl-diphosphatase of Synechococcus sp. (strain CC9902).